Consider the following 610-residue polypeptide: UvrABC system protein C (610 aa).

The GIY-YIG domain maps to 16–94 (SQPGVYRMYD…IKLYQPRYNV (79 aa)). The UVR domain maps to 204–239 (DQVLTQLISRMETASQNLEFEEAARIRDQIQAVRRV).

It belongs to the UvrC family. As to quaternary structure, interacts with UvrB in an incision complex.

Its subcellular location is the cytoplasm. The UvrABC repair system catalyzes the recognition and processing of DNA lesions. UvrC both incises the 5' and 3' sides of the lesion. The N-terminal half is responsible for the 3' incision and the C-terminal half is responsible for the 5' incision. This Escherichia coli (strain UTI89 / UPEC) protein is UvrABC system protein C.